Reading from the N-terminus, the 254-residue chain is Ciliary microtubule associated protein 1A (254 aa).

STPGR repeat units follow at residues 180–205 (PGPAAYRQTDVQVTKFKAPQYTMAAR) and 216–241 (PGPGAHSPEKVTMTRPCAPVVSFGIK). A disordered region spans residues 207–226 (EPPGDKTLKPGPGAHSPEKV).

Belongs to the CIMAP family. Microtubule inner protein component of sperm flagellar doublet microtubules.

The protein resides in the cytoplasm. It localises to the cytoskeleton. Its subcellular location is the flagellum axoneme. Outer dense fibers are filamentous structures located on the outside of the axoneme in the midpiece and principal piece of the mammalian sperm tail. May help to maintain the passive elastic structures and elastic recoil of the sperm tail. The protein is Ciliary microtubule associated protein 1A (CIMAP1A) of Bos taurus (Bovine).